The sequence spans 435 residues: Gamma-glutamyl phosphate reductase (435 aa).

It belongs to the gamma-glutamyl phosphate reductase family.

The protein resides in the cytoplasm. The catalysed reaction is L-glutamate 5-semialdehyde + phosphate + NADP(+) = L-glutamyl 5-phosphate + NADPH + H(+). Its pathway is amino-acid biosynthesis; L-proline biosynthesis; L-glutamate 5-semialdehyde from L-glutamate: step 2/2. Catalyzes the NADPH-dependent reduction of L-glutamate 5-phosphate into L-glutamate 5-semialdehyde and phosphate. The product spontaneously undergoes cyclization to form 1-pyrroline-5-carboxylate. This chain is Gamma-glutamyl phosphate reductase, found in Nostoc punctiforme (strain ATCC 29133 / PCC 73102).